We begin with the raw amino-acid sequence, 458 residues long: Neuronal acetylcholine receptor subunit beta-3 (458 aa).

The N-terminal stretch at 1-21 (MLPDFMLVLIVLGIPSSATTG) is a signal peptide. Over 22–237 (FNSIAENEDA…VLRRLPLFYT (216 aa)) the chain is Extracellular. 3 N-linked (GlcNAc...) asparagine glycosylation sites follow: Asn-51, Asn-138, and Asn-166. An intrachain disulfide couples Cys-153 to Cys-167. The next 3 membrane-spanning stretches (helical) occupy residues 238–258 (LFLI…FYLP), 267–287 (LSTS…EIIP), and 300–320 (LLFI…VINV). The Cytoplasmic portion of the chain corresponds to 321-428 (HHRSSSTYHP…WKFVAQVLDR (108 aa)). Residues 429–449 (IFLWLFLIVSVTGSVLIFTPA) form a helical membrane-spanning segment.

Belongs to the ligand-gated ion channel (TC 1.A.9) family. Acetylcholine receptor (TC 1.A.9.1) subfamily. Beta-3/CHRNB3 sub-subfamily. As to quaternary structure, neuronal AChR seems to be composed of two different type of subunits: alpha and beta. CHRNB3/beta-3 subunit is only able to form functional nAChRs when co-assembled with another beta subunit. Participates in pentameric assemblies along with CHRNA4/alpha-4 and CHRNB2/beta-2 subunits and with CHRNA6/alpha-6 as well, forming stoichiometries such as (CHRNA3:CHRNB4)2:CHRNB3, (CHRNA4:CHRNB2)2:CHRNB3 or (CHRNA6:CHRNB2)2:CHRNB3.

It is found in the synaptic cell membrane. The protein resides in the cell membrane. It catalyses the reaction Ca(2+)(in) = Ca(2+)(out). It carries out the reaction K(+)(in) = K(+)(out). The enzyme catalyses Na(+)(in) = Na(+)(out). With respect to regulation, activated by a myriad of ligands such as acetylcholine, cytisine, nicotine, choline and epibatidine. Functionally, component of neuronal acetylcholine receptors (nAChRs) that function as pentameric, ligand-gated cation channels with high calcium permeability among other activities. nAChRs are excitatory neurotrasnmitter receptors formed by a collection of nAChR subunits known to mediate synaptic transmission in the nervous system and the neuromuscular junction. Each nAchR subunit confers differential attributes to channel properties, including activation, deactivation and desensitization kinetics, pH sensitivity, cation permeability, and binding to allosteric modulators. Has an accessory rather than functional role and is only able to form functional nAChRs when co-assembled with another beta subunit. Participates in pentameric assemblies along with CHRNA3, CHRNA4, CHRNA6, CHRNB2 and CHRNB4. Modulates receptor assembly and increases receptor sensitivity to nicotine when associated with CHRNB2, CHRNA4 and/or CHRNA6 as well as CHRNA3 and CHRNB4. Seems to play a role in nicotine addiction. The polypeptide is Neuronal acetylcholine receptor subunit beta-3 (Homo sapiens (Human)).